The chain runs to 521 residues: GMP synthase [glutamine-hydrolyzing] (521 aa).

The Glutamine amidotransferase type-1 domain occupies 5 to 197 (KILILDFGSQ…VLDICGAQPG (193 aa)). The active-site Nucleophile is C81. Residues H171 and E173 contribute to the active site. A GMPS ATP-PPase domain is found at 198 to 390 (WTMPNYIEEA…LGLPREMVYR (193 aa)). Residue 225 to 231 (SGGVDSS) participates in ATP binding.

Homodimer.

The enzyme catalyses XMP + L-glutamine + ATP + H2O = GMP + L-glutamate + AMP + diphosphate + 2 H(+). The protein operates within purine metabolism; GMP biosynthesis; GMP from XMP (L-Gln route): step 1/1. Its function is as follows. Catalyzes the synthesis of GMP from XMP. The protein is GMP synthase [glutamine-hydrolyzing] of Neisseria meningitidis serogroup C (strain 053442).